We begin with the raw amino-acid sequence, 201 residues long: uncharacterized protein (201 aa).

Residues D64–K78 show a composition bias toward acidic residues. Disordered regions lie at residues D64 to A114 and I182 to Q201. The segment covering R96–R106 has biased composition (basic residues). Positions G189–Q201 are enriched in polar residues.

This is an uncharacterized protein from Ostreid herpesvirus 1 (isolate France) (OsHV-1).